Here is a 262-residue protein sequence, read N- to C-terminus: Type III pantothenate kinase (262 aa).

Residue D9–K16 participates in ATP binding. Substrate-binding positions include Y93 and G100–R103. D102 (proton acceptor) is an active-site residue. Position 122 (D122) interacts with K(+). T125 contacts ATP. Residue T175 coordinates substrate.

The protein belongs to the type III pantothenate kinase family. As to quaternary structure, homodimer. NH4(+) serves as cofactor. It depends on K(+) as a cofactor.

It is found in the cytoplasm. The enzyme catalyses (R)-pantothenate + ATP = (R)-4'-phosphopantothenate + ADP + H(+). The protein operates within cofactor biosynthesis; coenzyme A biosynthesis; CoA from (R)-pantothenate: step 1/5. Its function is as follows. Catalyzes the phosphorylation of pantothenate (Pan), the first step in CoA biosynthesis. In Nitrosospira multiformis (strain ATCC 25196 / NCIMB 11849 / C 71), this protein is Type III pantothenate kinase.